The chain runs to 166 residues: Deglycase PYRAB04690 (166 aa).

The PfpI endopeptidase domain maps to 1–166 (MRVLILSADQ…WMREFVKLLK (166 aa)). His-101 is a catalytic residue.

The protein belongs to the peptidase C56 family. As to quaternary structure, homohexamer formed by a dimer of trimers that assemble into a hollow ring structure.

It localises to the cytoplasm. It carries out the reaction N(omega)-(1-hydroxy-2-oxopropyl)-L-arginyl-[protein] + H2O = lactate + L-arginyl-[protein] + H(+). The catalysed reaction is N(6)-(1-hydroxy-2-oxopropyl)-L-lysyl-[protein] + H2O = lactate + L-lysyl-[protein] + H(+). It catalyses the reaction S-(1-hydroxy-2-oxopropyl)-L-cysteinyl-[protein] + H2O = lactate + L-cysteinyl-[protein] + H(+). The enzyme catalyses N(omega)-(1-hydroxy-2-oxoethyl)-L-arginyl-[protein] + H2O = L-arginyl-[protein] + glycolate + H(+). It carries out the reaction N(6)-(1-hydroxy-2-oxoethyl)-L-lysyl-[protein] + H2O = glycolate + L-lysyl-[protein] + H(+). The catalysed reaction is S-(1-hydroxy-2-oxoethyl)-L-cysteinyl-[protein] + H2O = glycolate + L-cysteinyl-[protein] + H(+). In terms of biological role, deglycase that catalyzes the deglycation of the Maillard adducts formed between amino groups of proteins and reactive carbonyl groups of glyoxals. Thus, functions as a protein deglycase that repairs methylglyoxal- and glyoxal-glycated proteins, and releases repaired proteins and lactate or glycolate, respectively. Deglycates cysteine, arginine and lysine residues in proteins, and thus reactivates these proteins by reversing glycation by glyoxals. Acts on early glycation intermediates (hemithioacetals and aminocarbinols), preventing the formation of advanced glycation endproducts (AGE) that cause irreversible damage. Also displays proteolytic activity. The polypeptide is Deglycase PYRAB04690 (Pyrococcus abyssi (strain GE5 / Orsay)).